Reading from the N-terminus, the 439-residue chain is NAD kinase (439 aa).

Phosphoserine occurs at positions 46, 48, 50, 55, and 64.

It belongs to the NAD kinase family. It depends on a divalent metal cation as a cofactor.

The catalysed reaction is NAD(+) + ATP = ADP + NADP(+) + H(+). The chain is NAD kinase (Nadk) from Mus musculus (Mouse).